The primary structure comprises 236 residues: RING-H2 finger protein ATL7 (236 aa).

A helical membrane pass occupies residues 31–51 (AFIFSVPICFTFIVLFVLYVI). The RING-type; atypical zinc finger occupies 111 to 153 (CSVCLGDYQAEEKLQQMPSCGHTFHMECIDLWLTSHTTCPLCR). Residues 176-196 (ENSNGGEASTQPDSQSATEAI) are compositionally biased toward polar residues. A disordered region spans residues 176-236 (ENSNGGEAST…SDGCCTCRLG (61 aa)). Residues 197–221 (SHTDDVEEGNRDSQEVSKETEENDR) are compositionally biased toward basic and acidic residues.

Belongs to the RING-type zinc finger family. ATL subfamily.

It localises to the membrane. It carries out the reaction S-ubiquitinyl-[E2 ubiquitin-conjugating enzyme]-L-cysteine + [acceptor protein]-L-lysine = [E2 ubiquitin-conjugating enzyme]-L-cysteine + N(6)-ubiquitinyl-[acceptor protein]-L-lysine.. Its pathway is protein modification; protein ubiquitination. The chain is RING-H2 finger protein ATL7 (ATL7) from Arabidopsis thaliana (Mouse-ear cress).